Here is a 351-residue protein sequence, read N- to C-terminus: uncharacterized protein (351 aa).

This is an uncharacterized protein from Schizosaccharomyces pombe (strain 972 / ATCC 24843) (Fission yeast).